A 475-amino-acid chain; its full sequence is Ribulose bisphosphate carboxylase large chain (475 aa).

The propeptide occupies 1-2; sequence MS. At P3 the chain carries N-acetylproline. The residue at position 14 (K14) is an N6,N6,N6-trimethyllysine. Residues N123 and T173 each contribute to the substrate site. K175 acts as the Proton acceptor in catalysis. A substrate-binding site is contributed by K177. Mg(2+) is bound by residues K201, D203, and E204. Residue K201 is modified to N6-carboxylysine. H294 functions as the Proton acceptor in the catalytic mechanism. R295, H327, and S379 together coordinate substrate.

It belongs to the RuBisCO large chain family. Type I subfamily. In terms of assembly, heterohexadecamer of 8 large chains and 8 small chains; disulfide-linked. The disulfide link is formed within the large subunit homodimers. Mg(2+) is required as a cofactor. The disulfide bond which can form in the large chain dimeric partners within the hexadecamer appears to be associated with oxidative stress and protein turnover.

The protein localises to the plastid. It localises to the chloroplast. The catalysed reaction is 2 (2R)-3-phosphoglycerate + 2 H(+) = D-ribulose 1,5-bisphosphate + CO2 + H2O. It carries out the reaction D-ribulose 1,5-bisphosphate + O2 = 2-phosphoglycolate + (2R)-3-phosphoglycerate + 2 H(+). Functionally, ruBisCO catalyzes two reactions: the carboxylation of D-ribulose 1,5-bisphosphate, the primary event in carbon dioxide fixation, as well as the oxidative fragmentation of the pentose substrate in the photorespiration process. Both reactions occur simultaneously and in competition at the same active site. The polypeptide is Ribulose bisphosphate carboxylase large chain (Pinus krempfii (Krempf's pine)).